A 57-amino-acid chain; its full sequence is uncharacterized protein (57 aa).

This is an uncharacterized protein from Thermoproteus tenax virus 1 (strain KRA1) (TTV1).